The sequence spans 326 residues: Glycerol-3-phosphate dehydrogenase [NAD(P)+] (326 aa).

Residues Ser10, Phe11, Arg31, and Lys108 each contribute to the NADPH site. Sn-glycerol 3-phosphate is bound by residues Lys108, Gly136, and Ser138. Position 140 (Ala140) interacts with NADPH. The sn-glycerol 3-phosphate site is built by Lys191, Asp246, Ser256, Arg257, and Asn258. The active-site Proton acceptor is Lys191. Arg257 serves as a coordination point for NADPH. 2 residues coordinate NADPH: Ile281 and Glu283.

Belongs to the NAD-dependent glycerol-3-phosphate dehydrogenase family.

The protein localises to the cytoplasm. The catalysed reaction is sn-glycerol 3-phosphate + NAD(+) = dihydroxyacetone phosphate + NADH + H(+). It carries out the reaction sn-glycerol 3-phosphate + NADP(+) = dihydroxyacetone phosphate + NADPH + H(+). Its pathway is membrane lipid metabolism; glycerophospholipid metabolism. Functionally, catalyzes the reduction of the glycolytic intermediate dihydroxyacetone phosphate (DHAP) to sn-glycerol 3-phosphate (G3P), the key precursor for phospholipid synthesis. The polypeptide is Glycerol-3-phosphate dehydrogenase [NAD(P)+] (Ehrlichia chaffeensis (strain ATCC CRL-10679 / Arkansas)).